We begin with the raw amino-acid sequence, 534 residues long: Pentatricopeptide repeat-containing protein At5g59600 (534 aa).

12 PPR repeats span residues 50–80, 81–115, 116–150, 151–181, 182–216, 217–251, 252–286, 287–321, 322–352, 353–387, 388–418, and 424–454; these read LTRI…MPKR, DISG…GLKL, DAFI…SYES, DAFI…LGEQ, DLVV…GIKP, DVIT…GYKP, DVVS…GLYP, NSAT…GLED, HGFV…TPKK, TTVT…GEKL, DHLT…MQNK, and RLEH…MRME. Residues 459-534 form a type E motif region; the sequence is VWGALLAACR…FLGSSWVETV (76 aa).

It belongs to the PPR family. PCMP-E subfamily.

The sequence is that of Pentatricopeptide repeat-containing protein At5g59600 (PCMP-E1) from Arabidopsis thaliana (Mouse-ear cress).